A 156-amino-acid chain; its full sequence is Transcription antitermination protein NusB (156 aa).

It belongs to the NusB family.

Involved in transcription antitermination. Required for transcription of ribosomal RNA (rRNA) genes. Binds specifically to the boxA antiterminator sequence of the ribosomal RNA (rrn) operons. The polypeptide is Transcription antitermination protein NusB (Rickettsia akari (strain Hartford)).